Here is a 428-residue protein sequence, read N- to C-terminus: PGL/p-HBAD biosynthesis glycosyltransferase MRA_2985 (428 aa).

Residues 1–23 are disordered; the sequence is MEETSVAGDPGPDAGTSTAPNAA.

This sequence belongs to the UDP-glycosyltransferase family.

Functionally, involved in glycosylation steps downstream of mono-O-methyl-glycosyl-p-hydroxybenzoic acid derivative (p-HBAD I) and 2-O-methyl-rhamnosyl-phenolphthiocerol dimycocerosate (mycoside B) during the p-hydroxybenzoic acid derivatives (p-HBAD) and glycosylated phenolphthiocerol dimycocerosates (PGL) biosynthesis. In Mycobacterium tuberculosis (strain ATCC 25177 / H37Ra), this protein is PGL/p-HBAD biosynthesis glycosyltransferase MRA_2985.